The sequence spans 331 residues: Dioxygenase swnH2 (331 aa).

Over residues 1 to 11 the composition is skewed to polar residues; that stretch reads MINSDAQSAQK. Residues 1 to 31 are disordered; the sequence is MINSDAQSAQKQVEVEKPDEKYSAPRLLPPI. The segment covering 13 to 23 has biased composition (basic and acidic residues); the sequence is VEVEKPDEKYS. Fe cation-binding residues include histidine 173, aspartate 175, and histidine 250.

It belongs to the PhyH family. Homodimer. Fe cation serves as cofactor.

It participates in mycotoxin biosynthesis. In terms of biological role, dioxygenase; part of the gene cluster that mediates the biosynthesis of swainsonine (SW), a cytotoxic fungal alkaloid and a potential cancer therapy drug. Swainsonine production occurs via a multibranched pathway and is dispensable for fungal colonization of plants and infection of insect hosts. The first step of swainsonine biosynthesis is the production of the precursor pipecolic acid (PA) via conversion of L-lysine (Lys) to 1-piperideine-6-carboxylate (P6C) by the aminotransferase swnA, the latter being further reduced to PA by the reductase swnR. PA can be converted from lysine by both the SW biosynthetic cluster and the unclustered genes such as lysine cyclodeaminase. The PKS-NRPS hybrid synthetase swnK uptakes and condensates PA and malonyl-CoA with and without skipping of the ketoreductase (KR) domain in order to produce 3 intermediates, 1-oxoindolizidine, (1S)-1-hydroxyindolizin, and (1R)-1-hydroxyindolizine; with the transisomer (1S)-1-hydroxyindolizin being predominant. The terminal thioester reductase (TE) domain of swnK is involved in reduction of the thioester bond to release the intermediate aldehydes. The oxidoreductase swnN could contribute to the reduction of 1-oxoindolizidine to (1S)-1-hydroxyindolizin and (1R)-1-hydroxyindolizine, contributing to the major route of SW production. The dioxygenase swnH2 would be responsible for the oxidization of (1R)-1-hydroxyindolizine into (1R,2S)-1,2-dihydroxyindolizine and of (1S)-1-hydroxyindolizin to yield both (1R,2S)-1,2-dihydroxyindolizine and (1S,2S)-1,2-dihydroxyindolizine. The dioxygenase swnH1 then performs the conversion of the 1,2-dihydroxyindolizine epimers to SW. The chain is Dioxygenase swnH2 from Metarhizium robertsii (strain ARSEF 23 / ATCC MYA-3075) (Metarhizium anisopliae (strain ARSEF 23)).